The following is a 225-amino-acid chain: Protein-L-isoaspartate O-methyltransferase 2 (225 aa).

The active site involves Ser-73.

It belongs to the methyltransferase superfamily. L-isoaspartyl/D-aspartyl protein methyltransferase family.

Its subcellular location is the cytoplasm. The catalysed reaction is [protein]-L-isoaspartate + S-adenosyl-L-methionine = [protein]-L-isoaspartate alpha-methyl ester + S-adenosyl-L-homocysteine. Its function is as follows. Catalyzes the methyl esterification of L-isoaspartyl residues in peptides and proteins that result from spontaneous decomposition of normal L-aspartyl and L-asparaginyl residues. It plays a role in the repair and/or degradation of damaged proteins. In Pelobacter propionicus (strain DSM 2379 / NBRC 103807 / OttBd1), this protein is Protein-L-isoaspartate O-methyltransferase 2.